Here is a 184-residue protein sequence, read N- to C-terminus: Photosystem I assembly protein Ycf4 (184 aa).

The next 2 helical transmembrane spans lie at 21-43 (NFFWACILFLGSLGFFLVGISSY) and 58-78 (LFVPQGIVMCFYGIAGLFISS).

The protein belongs to the Ycf4 family.

The protein localises to the plastid. Its subcellular location is the chloroplast thylakoid membrane. In terms of biological role, seems to be required for the assembly of the photosystem I complex. The chain is Photosystem I assembly protein Ycf4 from Pinus thunbergii (Japanese black pine).